Consider the following 2051-residue polypeptide: Autophagy-related protein 2 (2051 aa).

Positions 31-121 (QALDLDNLNF…QDEQTAKNKK (91 aa)) constitute a Chorein N-terminal domain. The segment covering 108–117 (SKQEQDEQTA) has biased composition (basic and acidic residues). Disordered stretches follow at residues 108–129 (SKQEQDEQTAKNKKGTHKDGDE), 152–179 (RRLEKALAEEAQEALSESMSDSETDDDG), 297–331 (SLVKPQGPAPHDVPSTLRDMSGSMQSSVGGLDMSI), 363–384 (DTQYPEAEENVAGSSPLSTPRA), 419–466 (RSEP…ADTE), and 501–564 (PGGW…DTST). 2 stretches are compositionally biased toward polar residues: residues 374–383 (AGSSPLSTPR) and 426–435 (PPTSFQPQTM). Low complexity predominate over residues 436–454 (PSGAVSPAPSEPSSSASSV).

The protein belongs to the ATG2 family.

The protein resides in the preautophagosomal structure membrane. The protein localises to the endoplasmic reticulum membrane. The catalysed reaction is a 1,2-diacyl-sn-glycero-3-phosphocholine(in) = a 1,2-diacyl-sn-glycero-3-phosphocholine(out). It carries out the reaction a 1,2-diacyl-sn-glycero-3-phospho-L-serine(in) = a 1,2-diacyl-sn-glycero-3-phospho-L-serine(out). It catalyses the reaction a 1,2-diacyl-sn-glycero-3-phosphoethanolamine(in) = a 1,2-diacyl-sn-glycero-3-phosphoethanolamine(out). Lipid transfer protein required for autophagosome completion and peroxisome degradation. Tethers the edge of the isolation membrane (IM) to the endoplasmic reticulum (ER) and mediates direct lipid transfer from ER to IM for IM expansion. Atg-2 binds to the ER exit site (ERES), which is the membrane source for autophagosome formation, using basic residues in its N-terminal region (NR) and to the expanding edge of the IM through its C-terminal region. The latter binding is assisted by an atg-18-PtdIns3P interaction. Atg-2 then extracts phospholipids from the membrane source using its NR and transfers them to atg-9 to the IM through its predicted beta-sheet-rich structure for membrane expansion. In Neurospora crassa (strain ATCC 24698 / 74-OR23-1A / CBS 708.71 / DSM 1257 / FGSC 987), this protein is Autophagy-related protein 2 (apg-2).